A 24-amino-acid chain; its full sequence is FLPVLAGIAAKVVPALFCKITKKC.

Cysteine 18 and cysteine 24 form a disulfide bridge.

The protein belongs to the frog skin active peptide (FSAP) family. Brevinin subfamily. As to expression, expressed by the skin glands.

It is found in the secreted. Functionally, shows antibacterial activity against representative Gram-negative and Gram-positive bacterial species, and a very high hemolytic activity. The polypeptide is Brevinin-1 (Pelophylax porosus brevipodus (Nagoya Daruma pond frog)).